The chain runs to 362 residues: MRDETPERAAPLRFGYTTGSCATATSLAAARLLVAGHADDAVEIVLPKGQRVMMRLEFCRITADGAEAGTIKDAGDDPDVTHGALVFARVALSAAPGVRFHAGPGVGTVTRAGLTLPVGEPAINPVPRQMMTTHLDALAAEYGYAGGFDVTIGVEGGEALALKTMNPRLGIVGGLSILGTTGIVRPFSCSAYIASIHQGIDVARANGIAHIAACTGNTSEDAMRAHYGLPDMALIEMGDFAGAVLKHLRRAPVSRLSMCGGFGKLSKLAAGHLDLHSRHSSIDLPLLAQWAAEAGANDALQAAMRAANTSQEALKLALADGVPLGDLVCAHALRVARDIVPASVAVEMFAIDRQGRFVGSAR.

The protein belongs to the CbiD family.

The catalysed reaction is Co-precorrin-5B + S-adenosyl-L-methionine = Co-precorrin-6A + S-adenosyl-L-homocysteine. The protein operates within cofactor biosynthesis; adenosylcobalamin biosynthesis; cob(II)yrinate a,c-diamide from sirohydrochlorin (anaerobic route): step 6/10. In terms of biological role, catalyzes the methylation of C-1 in cobalt-precorrin-5B to form cobalt-precorrin-6A. This Burkholderia ambifaria (strain MC40-6) protein is Cobalt-precorrin-5B C(1)-methyltransferase.